The sequence spans 388 residues: (S)-8-oxocitronellyl enol synthase ISY1 (388 aa).

NADP(+)-binding positions include 35-37 (TGI), 63-64 (RR), 81-82 (DV), 105-106 (TW), and Gln143. Active-site residues include Lys147 and Tyr178. NADP(+) is bound by residues Tyr178, Ile205, and 212 to 214 (SMM).

This sequence belongs to the short-chain dehydrogenases/reductases (SDR) family.

The enzyme catalyses (S)-8-oxocitronellyl enol + NADP(+) = (6E)-8-oxogeranial + NADPH + H(+). It carries out the reaction (S)-8-oxocitronellyl enol + NAD(+) = (6E)-8-oxogeranial + NADH + H(+). Iridoid synthase that catalyzes the first step in generation of the iridoid ring scaffold using the linear monoterpene (6E)-8-oxogeranial as substrate. Iridoids comprise a large family of distinctive bicyclic monoterpenes that possess a wide range of pharmacological activities, including anticancer, anti-inflammatory, antifungal and antibacterial activities. Catalyzes the conversion of the linear monoterpene (6E)-8-oxogeranial to (S)-8-oxocitronellyl enol, a precursor of nepetalactones, which are metabolites that are both insect-repellent and have euphoric effect in cats. In Nepeta cataria (Catnip), this protein is (S)-8-oxocitronellyl enol synthase ISY1.